Reading from the N-terminus, the 139-residue chain is MPNFSGNWKIIRSENFEEMLKALGVNMMMRKIAVAAASKPAVEIKQENDDTFYIKTSTTVRTTEINFKIGEEFEEQTVDGRPCKSLVKWESENKMVCEQRLLKGEGPKTSWSRELTNDGELILTMTADDVVCTRVYVRE.

A Nuclear localization signal motif is present at residues 21-31; that stretch reads KALGVNMMMRK. K103 is covalently cross-linked (Glycyl lysine isopeptide (Lys-Gly) (interchain with G-Cter in SUMO)). 134-136 is an all-trans-retinoate binding site; the sequence is RVY.

It belongs to the calycin superfamily. Fatty-acid binding protein (FABP) family. In terms of assembly, interacts with importin alpha, RXR and RARA. Sumoylated in response to retinoic acid binding, sumoylation is critical for dissociation from ER and subsequent nuclear translocation.

The protein localises to the cytoplasm. It localises to the endoplasmic reticulum. The protein resides in the nucleus. Functionally, transports retinoic acid to the nucleus. Regulates the access of retinoic acid to the nuclear retinoic acid receptors. This Rattus norvegicus (Rat) protein is Cellular retinoic acid-binding protein 2 (Crabp2).